The chain runs to 207 residues: Interferon kappa (207 aa).

The N-terminal stretch at 1–27 is a signal peptide; the sequence is MSTKPDMIQKCLWLEILMGIFIAGTLS. 2 disulfides stabilise this stretch: cysteine 30–cysteine 128 and cysteine 59–cysteine 181. Residues 118-148 are a coiled coil; the sequence is LDQQAEYLNQCLEEDKNENEDMKEMKENEMK.

This sequence belongs to the alpha/beta interferon family. In terms of tissue distribution, expressed in keratinocytes, monocytes and in resting dendritic cells.

It localises to the secreted. May play a role in the regulation of immune cell function. Cytokine that imparts cellular protection against viral infection in a species-specific manner. Activates the interferon-stimulated response element signaling pathway. It is able to directly modulate cytokine release from monocytes and dendritic cells. Binds heparin. This Homo sapiens (Human) protein is Interferon kappa (IFNK).